Reading from the N-terminus, the 353-residue chain is Replication-associated protein (353 aa).

The CRESS-DNA virus Rep endonuclease domain occupies 8-116 (RVQSKNYFLT…DGVTIEWGQF (109 aa)). The short motif at 15–18 (FLTY) is the RCR-1 element. 3 residues coordinate a divalent metal cation: Glu49, His57, and His59. The RCR-2 signature appears at 57–59 (HLH). Catalysis depends on Tyr103, which acts as the For DNA cleavage activity. The RCR-3 signature appears at 103-106 (YIDK). A divalent metal cation is bound at residue Asp107. Residues 143–153 (IESALTILKEE) are binding to RBR1. Residues 156–176 (KDYVLQNHNIRSNLERIFFKV) are oligomerization. 222–229 (GDSRTGKT) is an ATP binding site.

The protein belongs to the geminiviridae Rep protein family. Homooligomer. Interacts with the replication enhancer protein (REn). Interacts with host retinoblastoma-related protein 1 (RBR1), and may thereby induce the transcription of host replicative enzymes even if the cell is not dividing anymore. Interacts with host PCNA. Interacts with host SCE1 protein. Mg(2+) serves as cofactor. The cofactor is Mn(2+).

It is found in the host nucleus. In terms of biological role, essential for the replication of viral ssDNA. The closed circular ssDNA genome is first converted to a superhelical dsDNA. Rep binds a specific region at the genome origin of replication. It introduces an endonucleolytic nick within the conserved sequence 5'-TAATATTAC-3' in the intergenic region of the genome present in all geminiviruses, thereby initiating the rolling circle replication (RCR). Following cleavage, binds covalently to the 5'-phosphate of DNA as a tyrosyl ester. The cleavage gives rise to a free 3'-OH that serves as a primer for the cellular DNA polymerase. The polymerase synthesizes the (+) strand DNA by rolling circle mechanism. After one round of replication, a Rep-catalyzed nucleotidyl transfer reaction releases a circular single-stranded virus genome, thereby terminating the replication. Displays origin-specific DNA cleavage, nucleotidyl transferase, ATPase and helicase activities. This is Replication-associated protein from Macroptilium lathyroides (Lima bean).